Reading from the N-terminus, the 275-residue chain is Calcyphosin (275 aa).

A disordered region spans residues 59 to 87 (PGTTQLTQGPAGRTLGQTQASCPEPRPSM). EF-hand domains are found at residues 107-142 (SGIQ…LGLV), 143-178 (LDQA…PMSQ), 179-214 (AREA…RAHP), and 222-258 (TEDE…VSAS). 14 residues coordinate Ca(2+): D120, D122, S124, S126, E131, D156, N158, S160, T162, E167, D192, S194, D196, and D203. Phosphoserine; by PKA is present on S126.

Monomer. Does not form oligomers in the presence of calcium.

The protein resides in the cytoplasm. Functionally, calcium-binding protein. May play a role in cellular signaling events (Potential). In Homo sapiens (Human), this protein is Calcyphosin.